Consider the following 160-residue polypeptide: Type-1 angiotensin II receptor-associated protein (160 aa).

Topologically, residues 1–9 are extracellular; it reads MELPAVNLK. A helical transmembrane segment spans residues 10-30; sequence VILLVHWLLTTWGCLAFSGSY. Residues 31–53 are Cytoplasmic-facing; that stretch reads AWGNFTILALGVWAVAQRDSVDA. A helical membrane pass occupies residues 54–74; the sequence is IGMFLGGLVATIFLDIIYISI. Topologically, residues 75 to 86 are extracellular; that stretch reads FYSSVAVGDTGR. Residues 87-107 traverse the membrane as a helical segment; it reads FSAGMAIFSLLLKPFSCCLVY. The Cytoplasmic segment spans residues 108–160; it reads HMHRERGGELPLRSDFFGPSQEHSAYQTIDSSDSPADPLASLENKGQAAPRGY. Residues 110–122 are interaction with AGTR1; sequence HRERGGELPLRSD. Ser127 carries the phosphoserine modification. Residues 128–160 are disordered; the sequence is QEHSAYQTIDSSDSPADPLASLENKGQAAPRGY. Thr135 carries the phosphothreonine modification. Over residues 137 to 149 the composition is skewed to low complexity; that stretch reads DSSDSPADPLASL. Phosphoserine is present on Ser138.

Interacts with RACK1, and with the carboxy-terminal region of AGTR1.

Its subcellular location is the endoplasmic reticulum membrane. The protein resides in the golgi apparatus membrane. It localises to the cytoplasmic vesicle membrane. Functionally, appears to be a negative regulator of type-1 angiotensin II receptor-mediated signaling by regulating receptor internalization as well as mechanism of receptor desensitization such as phosphorylation. May play a role of negative regulator in cardiomyocyte hypertrophy induced by angiotensin II through an inhibition of p38 mitogen-activated protein kinase pathway. Attenuates type-1 angiotensin II receptor growth promoting effect and angiotensin II-induced phosphorylation of protein kinase AKT and of STAT3. In Rattus norvegicus (Rat), this protein is Type-1 angiotensin II receptor-associated protein (Agtrap).